Here is a 303-residue protein sequence, read N- to C-terminus: UDP-3-O-acyl-N-acetylglucosamine deacetylase (303 aa).

The Zn(2+) site is built by His-78, His-237, and Asp-241. His-264 acts as the Proton donor in catalysis.

Belongs to the LpxC family. The cofactor is Zn(2+).

The enzyme catalyses a UDP-3-O-[(3R)-3-hydroxyacyl]-N-acetyl-alpha-D-glucosamine + H2O = a UDP-3-O-[(3R)-3-hydroxyacyl]-alpha-D-glucosamine + acetate. It functions in the pathway glycolipid biosynthesis; lipid IV(A) biosynthesis; lipid IV(A) from (3R)-3-hydroxytetradecanoyl-[acyl-carrier-protein] and UDP-N-acetyl-alpha-D-glucosamine: step 2/6. Its function is as follows. Catalyzes the hydrolysis of UDP-3-O-myristoyl-N-acetylglucosamine to form UDP-3-O-myristoylglucosamine and acetate, the committed step in lipid A biosynthesis. The polypeptide is UDP-3-O-acyl-N-acetylglucosamine deacetylase (Stenotrophomonas maltophilia (strain K279a)).